The sequence spans 156 residues: Small ribosomal subunit protein uS7 (156 aa).

Belongs to the universal ribosomal protein uS7 family. Part of the 30S ribosomal subunit. Contacts proteins S9 and S11.

One of the primary rRNA binding proteins, it binds directly to 16S rRNA where it nucleates assembly of the head domain of the 30S subunit. Is located at the subunit interface close to the decoding center, probably blocks exit of the E-site tRNA. The chain is Small ribosomal subunit protein uS7 from Sphingopyxis alaskensis (strain DSM 13593 / LMG 18877 / RB2256) (Sphingomonas alaskensis).